We begin with the raw amino-acid sequence, 299 residues long: Dye-decolorizing peroxidase YfeX (299 aa).

The Proton acceptor role is filled by aspartate 143. Histidine 215 is a heme binding site.

It belongs to the DyP-type peroxidase family. Heme b is required as a cofactor.

Its subcellular location is the cytoplasm. In terms of biological role, has both general peroxidase activity and dye-decolorizing activity. Can catalyze the oxidation of both protoporphyrinogen IX and coproporphyrinogen III to their corresponding porphyrins. Also efficiently decolorizes the dyes alizarin red and Cibacron blue F3GA. The sequence is that of Dye-decolorizing peroxidase YfeX (yfeX) from Escherichia coli (strain K12).